A 448-amino-acid polypeptide reads, in one-letter code: Putative RNA-ligase (448 aa).

It belongs to the asfivirus M448R family.

It is found in the virion. The chain is Putative RNA-ligase from Ornithodoros (relapsing fever ticks).